Consider the following 339-residue polypeptide: Longiborneol synthase CLM1 (339 aa).

A compositionally biased stretch (polar residues) spans 1–17 (MLATPTLSNFDKPSLPS). Residues 1 to 21 (MLATPTLSNFDKPSLPSSEGG) form a disordered region. The Mg(2+) site is built by D112, N241, S245, and E249. The NDXXSXXXE magnesium-binding motif signature appears at 241–249 (NDVLSFYKE).

Belongs to the trichodiene synthase family. The cofactor is Mg(2+). Mn(2+) is required as a cofactor.

The enzyme catalyses (2E,6E)-farnesyl diphosphate + H2O = (-)-longiborneol + diphosphate. The protein operates within mycotoxin biosynthesis. Its function is as follows. Terpene cyclase involved in the biosynthesis of culmorin, a tricyclic sesquiterpene diol reported to have antifungal activity and some phytotoxicity to wheat coleoptile tissue, contributing to Fusarium head blight disease. The terpene cyclase CLM1 is responsible for the cyclization of farnesyl diphosphate into the intermediate longiborneol. Longiborneol is then hydroxylated in a regio- and endo-stereoselective manner at position C-11 by the cytochrome P450 monooxygenase CLM2 to produce culmorin. Additional non-specific oxygenases are also able to hydroxylate longiborneol at other sites than C-11 leading to 3-hydroxylongiborneol, 5-hydroxylongiborneol, 12-hydroxylongiborneol and 15-hydroxylongiborneol. Moreover, another oxygenase capable of installing a C-11 exo-hydroxy group in longiborneol can also yield 11-epi-acetylculmorin. The production of these longiborneol derivatives is dwarfed by the high abundance of culmorin, suggesting that CLM2 displays superior enzymatic activity to the unidentified, possibly promiscuous, additional oxygenases. This chain is Longiborneol synthase CLM1, found in Gibberella zeae (strain ATCC MYA-4620 / CBS 123657 / FGSC 9075 / NRRL 31084 / PH-1) (Wheat head blight fungus).